Consider the following 96-residue polypeptide: uncharacterized protein (96 aa).

Transmembrane regions (helical) follow at residues 27 to 47 (LAFR…ALLI) and 50 to 70 (LSGV…SIVF).

The protein resides in the cell membrane. This is an uncharacterized protein from Haemophilus influenzae (strain ATCC 51907 / DSM 11121 / KW20 / Rd).